The chain runs to 124 residues: Small ribosomal subunit protein uS12 (124 aa).

A disordered region spans residues 1–22; sequence MATVNQLVRKPRQKPDAKSNVA. 3-methylthioaspartic acid is present on aspartate 89.

This sequence belongs to the universal ribosomal protein uS12 family. Part of the 30S ribosomal subunit. Contacts proteins S8 and S17. May interact with IF1 in the 30S initiation complex.

In terms of biological role, with S4 and S5 plays an important role in translational accuracy. Interacts with and stabilizes bases of the 16S rRNA that are involved in tRNA selection in the A site and with the mRNA backbone. Located at the interface of the 30S and 50S subunits, it traverses the body of the 30S subunit contacting proteins on the other side and probably holding the rRNA structure together. The combined cluster of proteins S8, S12 and S17 appears to hold together the shoulder and platform of the 30S subunit. The protein is Small ribosomal subunit protein uS12 of Pseudoalteromonas atlantica (strain T6c / ATCC BAA-1087).